The following is a 95-amino-acid chain: Cell division topological specificity factor (95 aa).

It belongs to the MinE family.

Functionally, prevents the cell division inhibition by proteins MinC and MinD at internal division sites while permitting inhibition at polar sites. This ensures cell division at the proper site by restricting the formation of a division septum at the midpoint of the long axis of the cell. This is Cell division topological specificity factor from Microcystis aeruginosa (strain NIES-843 / IAM M-2473).